A 469-amino-acid polypeptide reads, in one-letter code: E3 ubiquitin-protein ligase TRAIP (469 aa).

The RING-type zinc finger occupies 7 to 50 (CTICSDFFDHSRDVAAIHCGHTFHLQCLIQWFETAPSRTCPQCR). 2 coiled-coil regions span residues 70–177 (EENV…QSQR) and 201–280 (CVSL…TLNL). An interaction with CYLD region spans residues 211-469 (LKEARKASGE…QAKLDTFLWS (259 aa)). Residue K304 forms a Glycyl lysine isopeptide (Lys-Gly) (interchain with G-Cter in SUMO2) linkage. The PIP-box motif lies at 460–469 (QAKLDTFLWS).

This sequence belongs to the TRAIP family. In terms of assembly, interacts (via PIP-box) with PCNA. Binds TRAF1, TRAF2, TRAF3, TRAF5 and TRAF6 is part of the receptor-TRAF signaling complex. May interact with CYLD; the C-terminus interacts with CYLD, however the interaction was not detected with the full-length protein. Interacts with POLK and POLN. Interacts with UIMC1. Post-translationally, sumoylated; sumoylation is required for nuclear localization. Sumoylation increases protein stability, possibly by preventing ubiquitination. Autoubiquitinated.

The protein localises to the nucleus. It is found in the nucleoplasm. It localises to the nucleolus. The protein resides in the chromosome. Its subcellular location is the cytoplasm. The protein localises to the perinuclear region. It carries out the reaction S-ubiquitinyl-[E2 ubiquitin-conjugating enzyme]-L-cysteine + [acceptor protein]-L-lysine = [E2 ubiquitin-conjugating enzyme]-L-cysteine + N(6)-ubiquitinyl-[acceptor protein]-L-lysine.. The protein operates within protein modification; protein ubiquitination. Functionally, E3 ubiquitin ligase required to protect genome stability in response to replication stress. Acts as a key regulator of interstrand cross-link repair, which takes place when both strands of duplex DNA are covalently tethered together, thereby blocking replication and transcription. Controls the choice between the two pathways of replication-coupled interstrand-cross-link repair by mediating ubiquitination of MCM7 subunit of the CMG helicase complex. Short ubiquitin chains on MCM7 promote recruitment of DNA glycosylase NEIL3. If the interstrand cross-link cannot be cleaved by NEIL3, the ubiquitin chains continue to grow on MCM7, promoting the unloading of the CMG helicase complex by the VCP/p97 ATPase, enabling the Fanconi anemia DNA repair pathway. Only catalyzes ubiquitination of MCM7 when forks converge. Also involved in the repair of covalent DNA-protein cross-links (DPCs) during DNA synthesis: promotes ubiquitination of DPCs, leading to their degradation by the proteasome. Has also been proposed to play a role in promoting translesion synthesis by mediating the assembly of 'Lys-63'-linked poly-ubiquitin chains on the Y-family polymerase POLN in order to facilitate bypass of DNA lesions and preserve genomic integrity. The function in translesion synthesis is however controversial. Acts as a regulator of the spindle assembly checkpoint. Also acts as a negative regulator of innate immune signaling by inhibiting activation of NF-kappa-B mediated by TNF. Negatively regulates TLR3/4- and RIG-I-mediated IRF3 activation and subsequent IFNB1 production and cellular antiviral response by promoting 'Lys-48'-linked polyubiquitination of TNK1 leading to its proteasomal degradation. This Homo sapiens (Human) protein is E3 ubiquitin-protein ligase TRAIP.